We begin with the raw amino-acid sequence, 1400 residues long: DNA-directed RNA polymerase subunit beta (1400 aa).

It belongs to the RNA polymerase beta chain family. The RNAP catalytic core consists of 2 alpha, 1 beta, 1 beta' and 1 omega subunit. When a sigma factor is associated with the core the holoenzyme is formed, which can initiate transcription.

It catalyses the reaction RNA(n) + a ribonucleoside 5'-triphosphate = RNA(n+1) + diphosphate. Functionally, DNA-dependent RNA polymerase catalyzes the transcription of DNA into RNA using the four ribonucleoside triphosphates as substrates. The protein is DNA-directed RNA polymerase subunit beta of Acidiphilium cryptum (strain JF-5).